Consider the following 481-residue polypeptide: Delta 4,5-hexuronate-2-O-sulfatase (481 aa).

The residue at position 64 (S64) is a 3-oxoalanine (Ser). 4 residues coordinate Zn(2+): C225, C226, H462, and H469. The interval 453–481 (VDADPRCRNHTPGYPSHEGPGAREILKRK) is disordered. Basic and acidic residues predominate over residues 472–481 (PGAREILKRK).

Belongs to the sulfatase family. The cofactor is Zn(2+). The conversion to 3-oxoalanine (also known as C-formylglycine, FGly), of a serine or cysteine residue in prokaryotes and of a cysteine residue in eukaryotes, is critical for catalytic activity.

Its function is as follows. Exosulfatase involved in the degradation of the glycosaminoglycans (GAGs) chondroitin sulfate (CS), dermatan sulfate (DS) and heparan sulfate (HS). 2-O-sulfatase active on unsaturated non-reducing end hexuronate units. Has a slight preference for HS-derived structures. GAG-specific sulfatases play a key role in the persistence of the major human gut symbiont B.thetaiotaomicron in the host gastrointestinal tract. The polypeptide is Delta 4,5-hexuronate-2-O-sulfatase (Bacteroides thetaiotaomicron (strain ATCC 29148 / DSM 2079 / JCM 5827 / CCUG 10774 / NCTC 10582 / VPI-5482 / E50)).